Here is a 304-residue protein sequence, read N- to C-terminus: Splicing factor U2af small subunit B (304 aa).

The C3H1-type 1 zinc finger occupies 12–40 (EKDRVNCPFYFKIGACRHGDRCSRLHNRP). Positions 44 to 146 (PTIVLANMYQ…RPIIVEYSPV (103 aa)) constitute an RRM domain. The C3H1-type 2 zinc finger occupies 148 to 175 (DFREATCRQFEENSCNRGGYCNFMHVKQ). A compositionally biased stretch (basic residues) spans 184 to 207 (LYGGRSRRSHGRSRSPSPRHRRGN). The interval 184–304 (LYGGRSRRSH…QWNREREEKP (121 aa)) is disordered. Basic and acidic residues predominate over residues 208–220 (RDRDDFRRERDGY). Residues 221–258 (RGGGDGYRGGGGGGGGDGYRGGDSYRGGGGGGRRGGGS) show a composition bias toward gly residues. Positions 268–280 (RRRHGSPPRRARS) are enriched in basic residues. Positions 281–304 (PVRESSEERRAKIEQWNREREEKP) are enriched in basic and acidic residues.

The protein belongs to the splicing factor SR family.

The protein resides in the nucleus. In terms of biological role, necessary for the splicing of pre-mRNA. In Oryza sativa subsp. japonica (Rice), this protein is Splicing factor U2af small subunit B (U2AF35B).